Reading from the N-terminus, the 1135-residue chain is Envelopment polyprotein (1135 aa).

A signal peptide spans 1 to 18 (MIMWGLLLTMILIDFGAS). Residues 19-495 (LRNVYDMKIE…ALLTTFCFGW (477 aa)) are Lumenal-facing. Cystine bridges form between C29–C151, C63–C157, C109–C128, C133–C138, C175–C185, C210–C247, C234–C351, C376–C435, C380–C389, C405–C424, and C452–C475. N-linked (GlcNAc...) asparagine; by host glycosylation is present at N134. 2 N-linked (GlcNAc...) asparagine; by host glycosylation sites follow: N235 and N347. N399 carries an N-linked (GlcNAc...) asparagine; by host glycan. A helical transmembrane segment spans residues 496–516 (ILILSITLAVLVVLKFFAAIL). Residues 516–533 (LHNSSQENRFKIILRKIK) form a binding to the ribonucleoprotein region. Over 517–627 (HNSSQENRFK…LNLFRYKSRC (111 aa)) the chain is Cytoplasmic. 2 consecutive CCHC-type zinc fingers follow at residues 545 to 565 (CEVC…NLSC) and 570 to 591 (CPYC…YKVC). Binding to the ribonucleoprotein regions lie at residues 588-605 (YKVC…KKTI), 592-603 (QATHRFRDDLKK), and 611-625 (SPGC…RYKS). Residues 611–634 (SPGCYRTLNLFRYKSRCYIFTVWV) form the ITAM domain. A phosphotyrosine mark is found at Y615 and Y628. The YxxL signature appears at 615–618 (YRTL). Residues 628–648 (YIFTVWVTLLIIESIMWAASA) form a helical membrane-spanning segment. The Lumenal portion of the chain corresponds to 649 to 1105 (SETVLEPSWN…EWITGIFNGN (457 aa)). Intrachain disulfides connect C735-C770, C739-C777, C751-C885, C765-C896, C780-C904, C806-C815, C823-C832, and C863-C867. The fusion loop stretch occupies residues 757–777 (FEYENNWGCNPADCPGIGTGC). A glycan (N-linked (GlcNAc...) asparagine; by host) is linked at N928. 5 disulfide bridges follow: C970-C1000, C993-C1045, C1010-C1015, C1046-C1051, and C1085-C1089. The chain crosses the membrane as a helical span at residues 1106 to 1126 (WIVIVVLVFFFILSLILLSLL). A binding to the ribonucleoprotein region spans residues 1122 to 1135 (LLSLLCPIRKHKRS). Residues 1127 to 1135 (CPIRKHKRS) lie on the Cytoplasmic side of the membrane.

The protein belongs to the hantavirus envelope glycoprotein family. Homodimer. Homotetramer; forms heterotetrameric Gn-Gc spikes in the pre-fusion conformation. Interacts (via C-terminus) with the nucleoprotein. Interacts with host TUFM; this interaction contributes to the virus-induced degradation of mitochondria by autophagy, which leads to degradation of host MAVS and inhibition of type I interferon (IFN) responses. Interacts with host MAP1LC3B; this interaction contributes to the virus-induced degradation of mitochondria by autophagy, which leads to degradation of host MAVS and inhibition of type I interferon (IFN) responses. In terms of assembly, homodimer. Homotetramer; forms heterotetrameric Gn-Gc spikes in the pre-fusion conformation. Homotrimer; forms homotrimer in the post-fusion conformation at acidic pH. Interacts (via C-terminus) with the nucleoprotein. In terms of processing, envelope polyprotein precursor is quickly cleaved in vivo just after synthesis, presumably by host signal peptidase.

Its subcellular location is the virion membrane. It is found in the host cell surface. It localises to the host Golgi apparatus membrane. The protein localises to the host endoplasmic reticulum membrane. The protein resides in the host mitochondrion. Forms homotetramers with glycoprotein C at the surface of the virion. Attaches the virion to host cell receptors including integrin ITGAV/ITGB3. This attachment induces virion internalization predominantly through clathrin-dependent endocytosis. Mediates the assembly and budding of infectious virus particles through its interaction with the nucleocapsid protein and the viral genome. May dysregulate normal immune and endothelial cell responses through an ITAM motif. Translocates to mitochondria, binds to host TUFM and recruits MAP1LC3B. These interactions induce mitochondrial autophagy and therefore destruction of host MAVS leading to inhibition of type I interferon (IFN) responses. Concomitant breakdown of glycoprotein N is apparently prevented by the nucleoprotein that may inhibit Gn-stimulated autophagosome-lysosome fusion. Interacts with the viral genomic RNA. Its function is as follows. Forms homotetramers with glycoprotein N at the surface of the virion. Attaches the virion to host cell receptors including integrin ITGAV/ITGB3. This attachment induces virion internalization predominantly through clathrin-dependent endocytosis. Class II fusion protein that promotes fusion of viral membrane with host endosomal membrane after endocytosis of the virion. The chain is Envelopment polyprotein (GP) from Dobrava-Belgrade orthohantavirus (DOBV).